An 859-amino-acid polypeptide reads, in one-letter code: Cadherin-related family member 1 (859 aa).

Residues 1 to 21 (MRRGPRVALVLGLLRIYLAQA) form the signal peptide. Over 22 to 701 (NFAPHFFDNG…LIQTKDNPMK (680 aa)) the chain is Extracellular. 6 Cadherin domains span residues 36-135 (NGNM…APRF), 136-247 (IQEP…APIF), 248-354 (VGTP…PPTF), 360-473 (PQNK…VPKF), 474-577 (TSHY…YPQF), and 569-691 (DVND…MAAF). Asparagine 58 and asparagine 89 each carry an N-linked (GlcNAc...) asparagine glycan. Asparagine 288 carries N-linked (GlcNAc...) asparagine glycosylation. A helical membrane pass occupies residues 702–722 (AVGVLAGVMAIVVAITVLIST). Over 723 to 859 (ATFWRNKKSN…KKSLDNKAYI (137 aa)) the chain is Cytoplasmic. Positions 793-838 (PALPPPPKMASSMVAQQTVPTVSGSLTPQPSPQLPTPKTLGGPVQS) are disordered. Polar residues predominate over residues 805–816 (MVAQQTVPTVSG).

Interacts with PROM1. In terms of processing, undergoes proteolytic cleavage; produces a soluble 95 kDa N-terminal fragment and a 25 kDa cell-associated C-terminal fragment. In terms of tissue distribution, expressed in cone and rod photoreceptor cells (at protein level). Expressed in photoreceptor cells of the outer nuclear layer of the retina. Expressed in mitral and tufted cells in the olfactory bulb.

The protein localises to the cell membrane. In terms of biological role, potential calcium-dependent cell-adhesion protein. May be required for the structural integrity of the outer segment (OS) of photoreceptor cells. This chain is Cadherin-related family member 1 (Cdhr1), found in Mus musculus (Mouse).